The primary structure comprises 477 residues: MDGFYDQQVPYMVTNNQRGRNCNEKPTNVRKRKFINRDLAHDSEELFQDLSQLQETWLAEAQVPDNDEQFVPDYQAESLAFHGLPLKIKKEPHSPCSELGSACSQEQPFKFSYGEKCLYNVSAYDQKPQVGMRPSNPPTPSSTPVSPLHHASPNSAHTSKPDRAFPAHLPPSQPIQDSSYPMDHRFRRQLSEPCNSFPPLPTMPREGRPMYQRQMSEPNIPFPPQGFKQEYHDPVYEHNTMVGGAASQSFPPPLMIKQEPRDFAYDSEVPSCHSIYMRQEGFLTHPSRTEGCMFEKGPRQFYDDTCVVPEKFDGDIKQEPGMYREGPTYQRRGSLQLWQFLVALLDDPSNSHFIAWTGRGMEFKLIEPEEVARRWGIQKNRPAMNYDKLSRSLRYYYEKGIMQKVAGERYVYKFVCDPEALFSMAFPDNQRPLLKTDMERHINEEDTVPLSHFDESMAYMPEGGCCNPHPYNEGYVY.

A Phosphoserine modification is found at serine 94. The segment at 128–178 is disordered; the sequence is PQVGMRPSNPPTPSSTPVSPLHHASPNSAHTSKPDRAFPAHLPPSQPIQDS. Phosphoserine; by RPS6KA1 and RPS6KA5 is present on residues serine 191 and serine 216. Residue lysine 317 forms a Glycyl lysine isopeptide (Lys-Gly) (interchain with G-Cter in SUMO2) linkage. The segment at residues 335–415 is a DNA-binding region (ETS); sequence LQLWQFLVAL…AGERYVYKFV (81 aa).

Belongs to the ETS family. In terms of processing, sumoylated. Phosphorylated at Ser-191 and Ser-216 by RPS6KA1 and RPS6KA5; phosphorylation activates transcriptional activity.

The protein localises to the nucleus. Transcriptional activator that binds to DNA sequences containing the consensus pentanucleotide 5'-CGGA[AT]-3'. Required for olfactory dopaminergic neuron differentiation; may directly activate expression of tyrosine hydroxylase (TH). This chain is ETS translocation variant 1 (ETV1), found in Bos taurus (Bovine).